A 259-amino-acid polypeptide reads, in one-letter code: MWAIGGVQLNSRLLLGTAQYPSPQLMSDAVKAAGVEIITVSLRRQLSPQKENYFWDLLRSLPCHLLPNTAGCSSVKEAVNTARAARELFNTHWIKLEIIGDEYTLQPNPFELVNAATILVKEGFEVFPYCTEDLILCQRLVDAGCRVLMPWAAPIGSGRGLMNTYALQVLRERFPKNILIIDAGLGRPSHAAQVMEMGFDAVLLNSAVALAMDPVVMAAGFAKAVEGGRLGYEGGMIKARNVAKATTPLIGKPFLIEKP.

K95 functions as the Schiff-base intermediate with DXP in the catalytic mechanism. Residues G156, 183 to 184 (AG), and 205 to 206 (NS) contribute to the 1-deoxy-D-xylulose 5-phosphate site.

Belongs to the ThiG family. As to quaternary structure, homotetramer. Forms heterodimers with either ThiH or ThiS.

Its subcellular location is the cytoplasm. The enzyme catalyses [ThiS sulfur-carrier protein]-C-terminal-Gly-aminoethanethioate + 2-iminoacetate + 1-deoxy-D-xylulose 5-phosphate = [ThiS sulfur-carrier protein]-C-terminal Gly-Gly + 2-[(2R,5Z)-2-carboxy-4-methylthiazol-5(2H)-ylidene]ethyl phosphate + 2 H2O + H(+). It functions in the pathway cofactor biosynthesis; thiamine diphosphate biosynthesis. Functionally, catalyzes the rearrangement of 1-deoxy-D-xylulose 5-phosphate (DXP) to produce the thiazole phosphate moiety of thiamine. Sulfur is provided by the thiocarboxylate moiety of the carrier protein ThiS. In vitro, sulfur can be provided by H(2)S. The protein is Thiazole synthase of Coxiella burnetii (strain RSA 331 / Henzerling II).